The primary structure comprises 146 residues: Large ribosomal subunit protein bL17 (146 aa).

The disordered stretch occupies residues 118 to 146; sequence RDPAAKGQDSGPKPEVASDEDEAGEAAAA. The segment covering 134–146 has biased composition (acidic residues); it reads ASDEDEAGEAAAA.

It belongs to the bacterial ribosomal protein bL17 family. In terms of assembly, part of the 50S ribosomal subunit. Contacts protein L32.

The sequence is that of Large ribosomal subunit protein bL17 from Acidiphilium cryptum (strain JF-5).